We begin with the raw amino-acid sequence, 525 residues long: NGFI-A-binding protein 2 (525 aa).

The tract at residues 1–31 is disordered; sequence MHRAPSPTAEQPPGRGDNTRRTPQPRFKASA. S6 is modified (phosphoserine). An NCD1 region spans residues 35 to 113; it reads ALPRTLGELQ…REWATNPGLF (79 aa). Residues 135 to 238 form a disordered region; sequence GTRKGSMSNG…GAGGGPDRLE (104 aa). Phosphoserine occurs at positions 157, 159, 162, and 171. Residues 212-234 show a composition bias toward gly residues; the sequence is AGGGVSEGPGVGGVAAGGAGGGP. The NCD2 stretch occupies residues 267 to 356; that stretch reads LLKLNKKLAR…SRQVARESTY (90 aa). The segment at 353–384 is necessary for nuclear localization; sequence ESTYLSSLKGSRLHSEELGGPPLKKLKQEVGE. K379 is covalently cross-linked (Glycyl lysine isopeptide (Lys-Gly) (interchain with G-Cter in SUMO1)). Residues 381 to 416 form a disordered region; it reads EVGEQSHNEIQQPPPGPESYAPPYRPSLEEDSASLS. Position 479 is a phosphoserine (S479). A disordered region spans residues 501–525; that stretch reads APGPHPALVEGRRSSVKVEAEASRQ. The span at 510-525 shows a compositional bias: basic and acidic residues; that stretch reads EGRRSSVKVEAEASRQ. K517 participates in a covalent cross-link: Glycyl lysine isopeptide (Lys-Gly) (interchain with G-Cter in SUMO1); alternate. A Glycyl lysine isopeptide (Lys-Gly) (interchain with G-Cter in SUMO2); alternate cross-link involves residue K517.

This sequence belongs to the NAB family. In terms of assembly, homomultimers may associate with EGR1 bound to DNA. Post-translationally, sumoylation by EGR2 represses EGR2 transcriptional activity in hindbrain. In terms of tissue distribution, highly expressed in brain and thymus, and at lower levels in spleen, kidney, heart and testis. Isoform 1 is predominantly expressed in testis, whereas isoform 3 is more abundant in thymus.

The protein resides in the nucleus. In terms of biological role, acts as a transcriptional repressor for zinc finger transcription factors EGR1 and EGR2. Isoform 2 lacks repression ability. This chain is NGFI-A-binding protein 2 (Nab2), found in Mus musculus (Mouse).